A 484-amino-acid chain; its full sequence is uncharacterized protein (484 aa).

12 helical membrane passes run 19–39 (LSFGVGITLWALIVFAYMIFV), 78–98 (VNWGITIGRGIGSVLVGWLIV), 110–130 (LFFMLFGIIAPYSPTYAGFII), 134–154 (IFAIGGTMQIILIQPVVSNYL), 165–185 (FSPFFYPIGTIITLIPFAGII), 199–219 (IVFLVIGLLTLIPLIGYIILG), 249–269 (TWYWTILYGSWLVAVVFPFTF), 289–309 (ISVFLIFFLAGMFLGPFTIGL), 321–341 (ISTIITLGVFFYVLATVVFVL), 360–380 (LFLFLGLFMGICLWGIQGVML), 398–418 (FGLIWGLGYTAFTIATIITSL), and 440–460 (LGAYILIIIFSLVSSIGLALL).

It localises to the cell membrane. This is an uncharacterized protein from Mesomycoplasma hyopneumoniae (strain J / ATCC 25934 / NCTC 10110) (Mycoplasma hyopneumoniae).